A 326-amino-acid polypeptide reads, in one-letter code: NAD-dependent protein deacylase SIR5 (326 aa).

The transit peptide at 1–26 (MRLLRPTPRLSSIFSSKTATSNLRFF) directs the protein to the mitochondrion. The Deacetylase sirtuin-type domain maps to 28 to 324 (AMAPHNDVGA…IGKLETDKKE (297 aa)). Residue 53-72 (GAGLSASSGLPTFRGAGGLW) participates in NAD(+) binding. Substrate contacts are provided by Tyr97 and Arg100. The active-site Proton acceptor is His151. Positions 159, 162, 211, and 214 each coordinate Zn(2+).

Belongs to the sirtuin family. Class I subfamily. In terms of assembly, interacts with LAT1; the interaction is direct. Zn(2+) is required as a cofactor.

Its subcellular location is the mitochondrion. The protein resides in the cytoplasm. It localises to the cytosol. It is found in the nucleus. The protein localises to the chromosome. The catalysed reaction is N(6)-acetyl-L-lysyl-[protein] + NAD(+) + H2O = 2''-O-acetyl-ADP-D-ribose + nicotinamide + L-lysyl-[protein]. The enzyme catalyses N(6)-(2E)-butenoyl-L-lysyl-[protein] + H2O = (2E)-2-butenoate + L-lysyl-[protein]. Functionally, NAD-dependent protein-lysine deacylase that decrotonylates the PDC (pyruvate dehydrogenase complex) subunit LAT1 at 'Lys-148' to inhibit PDC activity and consequently ATP production. Also decrotonylates histone H3 crotonylated at 'Lys-18' (H3K18cr), to repress the expression of genes involved in aerobic respiration. May also act as a NAD-dependent deacetylase. Does not mediate desuccinylation, demalonylation, or deglutarylation of LAT1. In Fusarium oxysporum f. sp. lycopersici (strain 4287 / CBS 123668 / FGSC 9935 / NRRL 34936) (Fusarium vascular wilt of tomato), this protein is NAD-dependent protein deacylase SIR5.